Consider the following 64-residue polypeptide: Large ribosomal subunit protein bL32 (64 aa).

Basic residues predominate over residues 1–10; sequence MAVPKRKTTP. The disordered stretch occupies residues 1–22; the sequence is MAVPKRKTTPSKRDMRRANHDK. Basic and acidic residues predominate over residues 11 to 22; the sequence is SKRDMRRANHDK.

Belongs to the bacterial ribosomal protein bL32 family.

This is Large ribosomal subunit protein bL32 from Sorangium cellulosum (strain So ce56) (Polyangium cellulosum (strain So ce56)).